Here is a 241-residue protein sequence, read N- to C-terminus: UDP-2,3-diacylglucosamine hydrolase (241 aa).

Mn(2+) contacts are provided by aspartate 8, histidine 10, aspartate 41, asparagine 78, and histidine 113. Substrate is bound at residue 78-79; sequence NR. The substrate site is built by aspartate 121, serine 159, asparagine 163, lysine 166, and histidine 194. Histidine 194 and histidine 196 together coordinate Mn(2+).

It belongs to the LpxH family. It depends on Mn(2+) as a cofactor.

It is found in the cell inner membrane. The catalysed reaction is UDP-2-N,3-O-bis[(3R)-3-hydroxytetradecanoyl]-alpha-D-glucosamine + H2O = 2-N,3-O-bis[(3R)-3-hydroxytetradecanoyl]-alpha-D-glucosaminyl 1-phosphate + UMP + 2 H(+). It participates in glycolipid biosynthesis; lipid IV(A) biosynthesis; lipid IV(A) from (3R)-3-hydroxytetradecanoyl-[acyl-carrier-protein] and UDP-N-acetyl-alpha-D-glucosamine: step 4/6. Its function is as follows. Hydrolyzes the pyrophosphate bond of UDP-2,3-diacylglucosamine to yield 2,3-diacylglucosamine 1-phosphate (lipid X) and UMP by catalyzing the attack of water at the alpha-P atom. Involved in the biosynthesis of lipid A, a phosphorylated glycolipid that anchors the lipopolysaccharide to the outer membrane of the cell. In Shewanella putrefaciens (strain CN-32 / ATCC BAA-453), this protein is UDP-2,3-diacylglucosamine hydrolase.